A 223-amino-acid polypeptide reads, in one-letter code: 7-cyano-7-deazaguanine synthase (223 aa).

8–18 (MSGGMDSTLCA) provides a ligand contact to ATP. Zn(2+) is bound by residues Cys-187, Cys-195, Cys-198, and Cys-201.

This sequence belongs to the QueC family. Zn(2+) is required as a cofactor.

The catalysed reaction is 7-carboxy-7-deazaguanine + NH4(+) + ATP = 7-cyano-7-deazaguanine + ADP + phosphate + H2O + H(+). It functions in the pathway purine metabolism; 7-cyano-7-deazaguanine biosynthesis. In terms of biological role, catalyzes the ATP-dependent conversion of 7-carboxy-7-deazaguanine (CDG) to 7-cyano-7-deazaguanine (preQ(0)). This is 7-cyano-7-deazaguanine synthase from Campylobacter curvus (strain 525.92).